The following is a 155-amino-acid chain: 2-C-methyl-D-erythritol 2,4-cyclodiphosphate synthase (155 aa).

Residues aspartate 8 and histidine 10 each coordinate a divalent metal cation. 4-CDP-2-C-methyl-D-erythritol 2-phosphate contacts are provided by residues 8–10 and 34–35; these read DVH and HS. Residue histidine 42 coordinates a divalent metal cation. 4-CDP-2-C-methyl-D-erythritol 2-phosphate-binding positions include 56-58, 61-65, 132-135, and arginine 142; these read DIG, FPDKD, and TTTE.

It belongs to the IspF family. In terms of assembly, homotrimer. The cofactor is a divalent metal cation.

It carries out the reaction 4-CDP-2-C-methyl-D-erythritol 2-phosphate = 2-C-methyl-D-erythritol 2,4-cyclic diphosphate + CMP. Its pathway is isoprenoid biosynthesis; isopentenyl diphosphate biosynthesis via DXP pathway; isopentenyl diphosphate from 1-deoxy-D-xylulose 5-phosphate: step 4/6. In terms of biological role, involved in the biosynthesis of isopentenyl diphosphate (IPP) and dimethylallyl diphosphate (DMAPP), two major building blocks of isoprenoid compounds. Catalyzes the conversion of 4-diphosphocytidyl-2-C-methyl-D-erythritol 2-phosphate (CDP-ME2P) to 2-C-methyl-D-erythritol 2,4-cyclodiphosphate (ME-CPP) with a corresponding release of cytidine 5-monophosphate (CMP). In Desulfatibacillum aliphaticivorans, this protein is 2-C-methyl-D-erythritol 2,4-cyclodiphosphate synthase.